An 83-amino-acid polypeptide reads, in one-letter code: Short neurotoxin II (83 aa).

A signal peptide spans 1 to 21 (MKTLLLTLVVVTVVCLDLGYT). 4 disulfides stabilise this stretch: C24/C45, C38/C62, C64/C75, and C76/C81.

It belongs to the three-finger toxin family. Short-chain subfamily. Type I alpha-neurotoxin sub-subfamily. As to expression, expressed by the venom gland.

Its subcellular location is the secreted. Functionally, binds to muscle nicotinic acetylcholine receptor (nAChR) and inhibit acetylcholine from binding to the receptor, thereby impairing neuromuscular transmission. This Laticauda colubrina (Yellow-lipped sea krait) protein is Short neurotoxin II.